The primary structure comprises 489 residues: Putative BTB/POZ domain-containing protein R773 (489 aa).

Residues 3–73 (SNIELVITDE…GNTSYKFQDK (71 aa)) form the BTB domain.

It belongs to the mimivirus BTB/WD family.

The protein is Putative BTB/POZ domain-containing protein R773 of Acanthamoeba polyphaga (Amoeba).